Here is a 91-residue protein sequence, read N- to C-terminus: Large ribosomal subunit protein uL23 (91 aa).

The protein belongs to the universal ribosomal protein uL23 family. In terms of assembly, part of the 50S ribosomal subunit. Contacts protein L29.

Binds to 23S rRNA. One of the proteins that surrounds the polypeptide exit tunnel on the outside of the ribosome. This is Large ribosomal subunit protein uL23 from Staphylothermus marinus (strain ATCC 43588 / DSM 3639 / JCM 9404 / F1).